The following is a 417-amino-acid chain: MLAWLLNMLKEEFSLSEVADILGVSKETLRRWDTAGKLVSQRNDENNYRFYKKEQLKNFEQAQFLFKSQWPDETKISNNVYTVLELFAGAGGMALGLEKAGLKSVLLNEIDSHACKTLRKNRPEWNVVEGDVSQVDFTPYRNTVDVLAGGFPCQAFSYAGKKLGFEDTRGTLFFEFARAAKEINPKVLLAENVRGLLNHDAGRTLETIKNIITDLGYTLFEPRVLKAIFYKVPQKRERLIIVAVRNDLADGIDYEWPSSYNKILTLKDALKKGELYDSDVPESEGQKYPKRKAEILSMVPPGGYWRDLPEDIQKEYMLKSFYLGGGKTGMARRLSWDEPSLTLTCAPAQKQTERCHPEETRPLTVREYARIQTFPDEWVFEGPMSAKYKQIGNAVPVNLSFAVGKSVVHLLDKINKR.

An SAM-dependent MTase C5-type domain is found at 81–414 (YTVLELFAGA…KSVVHLLDKI (334 aa)). The active site involves Cys-153.

It belongs to the class I-like SAM-binding methyltransferase superfamily. C5-methyltransferase family.

The catalysed reaction is a 2'-deoxycytidine in DNA + S-adenosyl-L-methionine = a 5-methyl-2'-deoxycytidine in DNA + S-adenosyl-L-homocysteine + H(+). Functionally, a methylase that recognizes the double-stranded sequence 5'-GGNCC-3', methylates C-? on both strands, and protects the DNA from cleavage by both the Eco47I and Eco47II endonucleases. In Escherichia coli, this protein is Type II methyltransferase M.Eco47II.